The sequence spans 177 residues: Coatomer subunit zeta-1 (177 aa).

At Met-1 the chain carries N-acetylmethionine.

It belongs to the adaptor complexes small subunit family. In terms of assembly, oligomeric complex that consists of at least the alpha, beta, beta', gamma, delta, epsilon and zeta subunits.

It is found in the cytoplasm. Its subcellular location is the golgi apparatus membrane. It localises to the cytoplasmic vesicle. The protein localises to the COPI-coated vesicle membrane. The coatomer is a cytosolic protein complex that binds to dilysine motifs and reversibly associates with Golgi non-clathrin-coated vesicles, which further mediate biosynthetic protein transport from the ER, via the Golgi up to the trans Golgi network. Coatomer complex is required for budding from Golgi membranes, and is essential for the retrograde Golgi-to-ER transport of dilysine-tagged proteins. The zeta subunit may be involved in regulating the coat assembly and, hence, the rate of biosynthetic protein transport due to its association-dissociation properties with the coatomer complex. This is Coatomer subunit zeta-1 (COPZ1) from Bos taurus (Bovine).